A 235-amino-acid chain; its full sequence is MPKTSKRLASLVNKIEERAYEPLEAIKLVKENATAKFDETVEAHARLGIDPKYTDQQLRTTVALPHGTGQTVRIAVITRGEKVAEAKAAGAELAGDEDLVETISKGEMDFDLLIATPDMMPKVAKLGRVLGPRGLMPNPKAGTVTTDLAAAINEFKAGKLEFRADRTGIVHVRFGKASFSEGNLLDNLKTLQETIDRNKPSGAKGRYWKSLYVTSTMGPSVEVDIAALQDINKDG.

The protein belongs to the universal ribosomal protein uL1 family. Part of the 50S ribosomal subunit.

Binds directly to 23S rRNA. The L1 stalk is quite mobile in the ribosome, and is involved in E site tRNA release. Functionally, protein L1 is also a translational repressor protein, it controls the translation of the L11 operon by binding to its mRNA. This is Large ribosomal subunit protein uL1 from Synechococcus sp. (strain WH7803).